Consider the following 182-residue polypeptide: uncharacterized protein (182 aa).

This sequence to M.tuberculosis Rv2313c.

This is an uncharacterized protein from Escherichia coli (strain K12).